The primary structure comprises 101 residues: Ubiquitin-like protein SMT3 (101 aa).

S2 is subject to N-acetylserine. Phosphoserine occurs at positions 2 and 4. Residues 22 to 98 enclose the Ubiquitin-like domain; the sequence is THINLKVSDG…IEAHREQIGG (77 aa). G98 is covalently cross-linked (Glycyl lysine isopeptide (Gly-Lys) (interchain with K-? in acceptor proteins)). Positions 99–101 are excised as a propeptide; sequence ATY.

It belongs to the ubiquitin family. SUMO subfamily. Activated by a E1 ligase composed of AOS1 and UBA2.

In terms of biological role, not known; suppressor of MIF2 mutations. The polypeptide is Ubiquitin-like protein SMT3 (SMT3) (Saccharomyces cerevisiae (strain ATCC 204508 / S288c) (Baker's yeast)).